Here is a 167-residue protein sequence, read N- to C-terminus: uncharacterized protein (167 aa).

Residues 70-118 adopt a coiled-coil conformation; it reads KIVELRKAMESIITELAYIKGELKGLQEKGESKVERKEIIEEKIQKAMV. The span at 128–155 shows a compositional bias: basic and acidic residues; the sequence is EKEERKPAKESKRREHDVIIPEGKKEER. The tract at residues 128-167 is disordered; that stretch reads EKEERKPAKESKRREHDVIIPEGKKEERTDDGEDGLIVCD.

This is an uncharacterized protein from Archaeoglobus fulgidus (strain ATCC 49558 / DSM 4304 / JCM 9628 / NBRC 100126 / VC-16).